The following is a 474-amino-acid chain: MEFEPVIGLEVHVQMSTNTKCFCSCKIEFGAEPNTNVCPVCLGMPGSLPVLNKKALEYAIKASLALNCEVHELSVFARKNYFYPDLPKGYQISQYDKPLATNGYIDIKVNDKTERIRIHRLHMEEDAGKTIHKGSYSYVDLNRAGTPLMEIVSEPDIRSAVGARLYLEKLRNIMRYIGVSDADMEKGQLRCDVNISLRPKGEEKFGTKVEIKNINSFRFVQKAIEYEIERQARILRKGGEIVQETRLFDEKTGKTFTMRTKEEAHDYRYFPDPDLIPVRITKEYIEEIRKSLPELPDQKAERYVKELKLTEYDAEVLVADKDRALFFEKAVSVYSENPKSIANWIINELLGKLNEEGIEISNSPVRPEHIAELVQLIDKGDISSKIGKEVFEEVFKTGKSPKTIVEEKGLKQVSDEGEIRKIVEEVLNNHPAEVEKYKAGNQKLMGFFVGQVMKATRGKANPKLVNKILQELLK.

This sequence belongs to the GatB/GatE family. GatB subfamily. Heterotrimer of A, B and C subunits.

The catalysed reaction is L-glutamyl-tRNA(Gln) + L-glutamine + ATP + H2O = L-glutaminyl-tRNA(Gln) + L-glutamate + ADP + phosphate + H(+). It catalyses the reaction L-aspartyl-tRNA(Asn) + L-glutamine + ATP + H2O = L-asparaginyl-tRNA(Asn) + L-glutamate + ADP + phosphate + 2 H(+). Allows the formation of correctly charged Asn-tRNA(Asn) or Gln-tRNA(Gln) through the transamidation of misacylated Asp-tRNA(Asn) or Glu-tRNA(Gln) in organisms which lack either or both of asparaginyl-tRNA or glutaminyl-tRNA synthetases. The reaction takes place in the presence of glutamine and ATP through an activated phospho-Asp-tRNA(Asn) or phospho-Glu-tRNA(Gln). The polypeptide is Aspartyl/glutamyl-tRNA(Asn/Gln) amidotransferase subunit B (Persephonella marina (strain DSM 14350 / EX-H1)).